We begin with the raw amino-acid sequence, 143 residues long: Nucleoside diphosphate kinase (143 aa).

Residues lysine 11, phenylalanine 59, arginine 87, threonine 93, arginine 104, and asparagine 114 each contribute to the ATP site. Histidine 117 functions as the Pros-phosphohistidine intermediate in the catalytic mechanism.

Belongs to the NDK family. In terms of assembly, homotetramer. It depends on Mg(2+) as a cofactor.

The protein resides in the cytoplasm. The catalysed reaction is a 2'-deoxyribonucleoside 5'-diphosphate + ATP = a 2'-deoxyribonucleoside 5'-triphosphate + ADP. It carries out the reaction a ribonucleoside 5'-diphosphate + ATP = a ribonucleoside 5'-triphosphate + ADP. In terms of biological role, major role in the synthesis of nucleoside triphosphates other than ATP. The ATP gamma phosphate is transferred to the NDP beta phosphate via a ping-pong mechanism, using a phosphorylated active-site intermediate. This chain is Nucleoside diphosphate kinase, found in Ectopseudomonas mendocina (strain ymp) (Pseudomonas mendocina).